We begin with the raw amino-acid sequence, 251 residues long: Probable transcriptional regulatory protein Amuc_0709 (251 aa).

It belongs to the TACO1 family.

It is found in the cytoplasm. This Akkermansia muciniphila (strain ATCC BAA-835 / DSM 22959 / JCM 33894 / BCRC 81048 / CCUG 64013 / CIP 107961 / Muc) protein is Probable transcriptional regulatory protein Amuc_0709.